Reading from the N-terminus, the 166-residue chain is uncharacterized protein (166 aa).

Residues 3 to 65 (LTEKETEILE…IDWRKVDGHE (63 aa)) form the HTH asnC-type domain. The H-T-H motif DNA-binding region spans 22 to 41 (LETIAKMAGIPVNEVKTIID).

This is an uncharacterized protein from Bacillus subtilis (strain 168).